Here is a 282-residue protein sequence, read N- to C-terminus: F-actin-capping protein subunit beta (282 aa).

A disordered region spans residues S73 to A103. A compositionally biased stretch (gly residues) spans G87–E101.

It belongs to the F-actin-capping protein beta subunit family. In terms of assembly, component of the F-actin capping complex, composed of a heterodimer of an alpha and a beta subunit.

The protein localises to the cytoplasm. Its subcellular location is the cytoskeleton. It localises to the actin patch. Functionally, F-actin-capping proteins bind in a Ca(2+)-independent manner to the fast growing ends of actin filaments (barbed end) thereby blocking the exchange of subunits at these ends. Unlike other capping proteins (such as gelsolin and severin), these proteins do not sever actin filaments. The polypeptide is F-actin-capping protein subunit beta (CAP2) (Gibberella zeae (strain ATCC MYA-4620 / CBS 123657 / FGSC 9075 / NRRL 31084 / PH-1) (Wheat head blight fungus)).